We begin with the raw amino-acid sequence, 881 residues long: Alanine--tRNA ligase (881 aa).

The span at 422–440 shows a compositional bias: basic and acidic residues; sequence FEDEMQKQKERARSARSTE. The interval 422–445 is disordered; it reads FEDEMQKQKERARSARSTEKSMGV. Residues H567, H571, C669, and H673 each contribute to the Zn(2+) site.

It belongs to the class-II aminoacyl-tRNA synthetase family. It depends on Zn(2+) as a cofactor.

It is found in the cytoplasm. It catalyses the reaction tRNA(Ala) + L-alanine + ATP = L-alanyl-tRNA(Ala) + AMP + diphosphate. Catalyzes the attachment of alanine to tRNA(Ala) in a two-step reaction: alanine is first activated by ATP to form Ala-AMP and then transferred to the acceptor end of tRNA(Ala). Also edits incorrectly charged Ser-tRNA(Ala) and Gly-tRNA(Ala) via its editing domain. The protein is Alanine--tRNA ligase of Pediococcus pentosaceus (strain ATCC 25745 / CCUG 21536 / LMG 10740 / 183-1w).